Consider the following 473-residue polypeptide: tRNA-2-methylthio-N(6)-dimethylallyladenosine synthase (473 aa).

The region spanning 5–125 is the MTTase N-terminal domain; that stretch reads RKLHIKSFGC…LPQLLAEAAR (121 aa). Residues Cys14, Cys50, Cys88, Cys166, Cys170, and Cys173 each contribute to the [4Fe-4S] cluster site. In terms of domain architecture, Radical SAM core spans 152–384; it reads RARGISAFVT…QELIDSQQAA (233 aa). Residues 387–449 enclose the TRAM domain; that stretch reads AAVIGTTVEV…RYSLIGELAA (63 aa). Residues 452 to 473 form a disordered region; that stretch reads QHSGFATRSEDSPQSLPITTGA.

The protein belongs to the methylthiotransferase family. MiaB subfamily. Monomer. [4Fe-4S] cluster is required as a cofactor.

It localises to the cytoplasm. The catalysed reaction is N(6)-dimethylallyladenosine(37) in tRNA + (sulfur carrier)-SH + AH2 + 2 S-adenosyl-L-methionine = 2-methylsulfanyl-N(6)-dimethylallyladenosine(37) in tRNA + (sulfur carrier)-H + 5'-deoxyadenosine + L-methionine + A + S-adenosyl-L-homocysteine + 2 H(+). Functionally, catalyzes the methylthiolation of N6-(dimethylallyl)adenosine (i(6)A), leading to the formation of 2-methylthio-N6-(dimethylallyl)adenosine (ms(2)i(6)A) at position 37 in tRNAs that read codons beginning with uridine. In Rhodopseudomonas palustris (strain BisB18), this protein is tRNA-2-methylthio-N(6)-dimethylallyladenosine synthase.